Reading from the N-terminus, the 118-residue chain is Large ribosomal subunit protein bL19 (118 aa).

Belongs to the bacterial ribosomal protein bL19 family.

Its function is as follows. This protein is located at the 30S-50S ribosomal subunit interface and may play a role in the structure and function of the aminoacyl-tRNA binding site. In Ligilactobacillus salivarius (strain UCC118) (Lactobacillus salivarius), this protein is Large ribosomal subunit protein bL19.